Consider the following 473-residue polypeptide: Mitochondrial distribution and morphology protein 10 (473 aa).

It belongs to the MDM10 family. In terms of assembly, component of the ER-mitochondria encounter structure (ERMES) or MDM complex, composed of MMM1, MDM10, MDM12 and MDM34. Associates with the mitochondrial outer membrane sorting assembly machinery SAM(core) complex.

It is found in the mitochondrion outer membrane. Its function is as follows. Component of the ERMES/MDM complex, which serves as a molecular tether to connect the endoplasmic reticulum and mitochondria. Components of this complex are involved in the control of mitochondrial shape and protein biogenesis and may function in phospholipid exchange. MDM10 is involved in the late assembly steps of the general translocase of the mitochondrial outer membrane (TOM complex). Functions in the TOM40-specific route of the assembly of outer membrane beta-barrel proteins, including the association of TOM40 with the receptor TOM22 and small TOM proteins. Can associate with the SAM(core) complex as well as the MDM12-MMM1 complex, both involved in late steps of the major beta-barrel assembly pathway, that is responsible for biogenesis of all outer membrane beta-barrel proteins. May act as a switch that shuttles between both complexes and channels precursor proteins into the TOM40-specific pathway. Plays a role in mitochondrial morphology and in the inheritance of mitochondria. The chain is Mitochondrial distribution and morphology protein 10 from Candida albicans (strain WO-1) (Yeast).